The sequence spans 626 residues: NAD-dependent malic enzyme, mitochondrial (626 aa).

Residues methionine 1 to phenylalanine 34 constitute a mitochondrion transit peptide. Fumarate is bound by residues arginine 91 and arginine 125. Catalysis depends on tyrosine 146, which acts as the Proton donor. Arginine 199 lines the (S)-malate pocket. NAD(+) is bound at residue arginine 199. Residue lysine 217 is the Proton acceptor of the active site. Residues glutamate 288, aspartate 289, and aspartate 312 each coordinate a divalent metal cation. NAD(+) contacts are provided by alanine 348 and alanine 351. Asparagine 467 and asparagine 512 together coordinate (S)-malate.

The protein belongs to the malic enzymes family. In terms of assembly, heterodimer of two related subunits. It depends on Mg(2+) as a cofactor. Requires Mn(2+) as cofactor.

The protein resides in the mitochondrion matrix. It catalyses the reaction (S)-malate + NAD(+) = pyruvate + CO2 + NADH. The protein is NAD-dependent malic enzyme, mitochondrial of Solanum tuberosum (Potato).